A 398-amino-acid polypeptide reads, in one-letter code: Potassium channel subfamily K member 4 (398 aa).

Topologically, residues 1-3 (MRS) are cytoplasmic. A helical membrane pass occupies residues 4 to 24 (TTLLALLALVLLYLVSGALVF). The Extracellular segment spans residues 25–88 (QALEQPHEQQ…WTNSSNHSSA (64 aa)). Residues asparagine 81 and asparagine 84 are each glycosylated (N-linked (GlcNAc...) asparagine). An intramembrane region (helical) is located at residues 89–103 (WNLGSAFFFSGTIIT). Positions 104, 105, 106, and 107 each coordinate K(+). Residues 104 to 109 (TIGYGN) form a selectivity filter 1 region. An intramembrane segment occupies 104 to 110 (TIGYGNI). Over 111–118 (VLHTDAGR) the chain is Extracellular. The helical transmembrane segment at 119 to 151 (LFCIFYALVGIPLFGMLLAGVGDRLGSSLRRGI) threads the bilayer. Topologically, residues 152–173 (GHIEAIFLKWHVPPGLVRSLSA) are cytoplasmic. A helical membrane pass occupies residues 174–195 (VLFLLIGCLLFVLTPTFVFSYM). At 196 to 200 (ESWSK) the chain is on the extracellular side. The segment at residues 201–214 (LEAIYFVIVTLTTV) is an intramembrane region (helical). 4 residues coordinate K(+): threonine 213, valine 214, glycine 215, and phenylalanine 216. A selectivity filter 2 region spans residues 213–218 (TVGFGD). An intramembrane segment occupies 215–220 (GFGDYV). Over 221 to 234 (PGDGTGQNSPAYQP) the chain is Extracellular. The helical transmembrane segment at 235 to 261 (LVWFWILFGLAYFASVLTTIGNWLRAV) threads the bilayer. Over 262–398 (SRRTRAEMGG…GRLRDKAVPV (137 aa)) the chain is Cytoplasmic. A compositionally biased stretch (polar residues) spans 282 to 292 (TVTARVTQRTG). Positions 282–398 (TVTARVTQRT…GRLRDKAVPV (117 aa)) are disordered. The span at 370 to 389 (PRGRRRPNPSKKPSRPRGPG) shows a compositional bias: basic residues.

It belongs to the two pore domain potassium channel (TC 1.A.1.8) family. As to quaternary structure, homodimer; disulfide-linked. Forms heterodimers with other 2-pore domain K(+) channel subunits, such as KCNK2 and KCNK10. In terms of processing, N-glycosylated. Expressed in brain, spinal cord and eye. Not detected in heart, skeletal muscle, liver, lungs, kidney and testis.

Its subcellular location is the cell membrane. It localises to the cell projection. The protein resides in the axon. It carries out the reaction K(+)(in) = K(+)(out). The catalysed reaction is Rb(+)(in) = Rb(+)(out). It catalyses the reaction Cs(+)(in) = Cs(+)(out). Its activity is regulated as follows. Activated by arachidonic acid and other polyunsaturated fatty acids. Not affected by volatile general anesthetics such as chloroform, diethyl ether, halothane and isoflurane. Activated at intracellular and extracellular basic pHs. In terms of biological role, k(+) channel that conducts voltage-dependent outward rectifying currents upon membrane depolarization. Voltage sensing is coupled to K(+) electrochemical gradient in an 'ion flux gating' mode where outward but not inward ion flow opens the gate. Converts to voltage-independent 'leak' conductance mode upon stimulation by various stimuli including mechanical membrane stretch, basic pH, temperature and lipids. Homo- and heterodimerizes to form functional channels with distinct regulatory and gating properties. At trigeminal A-beta afferent nerves, the heterodimer of KCNK2/TREK-1 and KCNK4/TRAAK is mostly coexpressed at nodes of Ranvier where it conducts voltage-independent mechanosensitive and thermosensitive currents, allowing rapid action potential repolarization, high speed and high frequence saltatory conduction on myelinated nerves to ensure prompt sensory responses. Permeable to other monovalent cations such as Rb(+) and Cs(+). This Mus musculus (Mouse) protein is Potassium channel subfamily K member 4.